A 301-amino-acid chain; its full sequence is MDNSRKYLLNFKGCNFERTLVDMKILEKLDDFEIRDDDVFVITYPKSGTVWTQQILSLIYFEGHRNRTEKWDTLDRVPFLEYNIRKVDIENRPSPRLFASHLPYYLAPKSLKNNKAKIIYVYRNPKDVLISFFHFSNMVVKLEASNTLENFMEKFLDGKVVGSIWFDHIRGWYEHKNDFNILFMMYEDMKKDLRSSILKISSFLEKDLSEEEVDAIVRQATFENMKFIPQANYNNILSNEIGRRHNEGAFLRKGAVGDWKHHMTVEQSERFDRIFQEEMKDFPLKFIWDLNDEANSNHSAK.

46–51 is a 3'-phosphoadenylyl sulfate binding site; that stretch reads KSGTVW. The active-site Proton acceptor is His-101. 3'-phosphoadenylyl sulfate contacts are provided by residues Arg-123, Ser-131, Tyr-186, 220-225, and 252-254; these read ATFENM and RKG.

It belongs to the sulfotransferase 1 family. In terms of tissue distribution, expressed in male liver.

It is found in the cytoplasm. The enzyme catalyses a primary amine + 3'-phosphoadenylyl sulfate = a sulfamate + adenosine 3',5'-bisphosphate + 2 H(+). Sulfotransferase that utilizes 3'-phospho-5'-adenylyl sulfate (PAPS) as sulfonate donor to catalyze the N-sulfonation of amines (PTHP, aniline, 4-chloroaniline, 2-naphthylamine). This Oryctolagus cuniculus (Rabbit) protein is Amine sulfotransferase (SULT3A1).